The sequence spans 111 residues: MKIINIGSERALEVIKAPQISEKATFLAEKVRQIIFYVSRDANKAEIKSAIEQIWKSQNIKVKSVQIINVKGKKKRFGRYIGQKSDWKKAFVSLKDDREIDFTDVRLFEDK.

It belongs to the universal ribosomal protein uL23 family. As to quaternary structure, part of the 50S ribosomal subunit. Contacts protein L29, and trigger factor when it is bound to the ribosome.

Functionally, one of the early assembly proteins it binds 23S rRNA. One of the proteins that surrounds the polypeptide exit tunnel on the outside of the ribosome. Forms the main docking site for trigger factor binding to the ribosome. The protein is Large ribosomal subunit protein uL23 of Nitrosomonas eutropha (strain DSM 101675 / C91 / Nm57).